We begin with the raw amino-acid sequence, 591 residues long: Paxillin (591 aa).

Met-1 is modified (N-acetylmethionine). Residues 3 to 15 (DLDALLADLESTT) carry the LD motif 1 motif. The interval 17-139 (HISKRPVFLS…SPTVMSSSLG (123 aa)) is disordered. The residue at position 31 (Tyr-31) is a Phosphotyrosine; by PTK6. The segment covering 45 to 54 (VPPPVPPPPS) has biased composition (pro residues). Ser-83 bears the Phosphoserine mark. Tyr-88 is modified (phosphotyrosine). The segment covering 89-99 (SSSAKNSSASN) has biased composition (low complexity). Ser-106 is subject to Phosphoserine. Tyr-118 carries the post-translational modification Phosphotyrosine; by PTK6. Residues Ser-119, Ser-126, and Ser-130 each carry the phosphoserine modification. Residues 121 to 137 (PNKQKSAEPSPTVMSSS) show a composition bias toward polar residues. Thr-132 carries the post-translational modification Phosphothreonine. Phosphoserine is present on residues Ser-137, Ser-140, and Ser-143. The LD motif 2 signature appears at 144–156 (ELDRLLLELNAVQ). A disordered region spans residues 156-261 (QHSPPGFPAD…QQQTRISASS (106 aa)). Residue Tyr-181 is modified to Phosphotyrosine. The short motif at 216-228 (SVESLLDELESSV) is the LD motif 3 element. Ser-230 carries the post-translational modification Phosphoserine. The segment covering 236–261 (TVNQGEMSSPQRVTSSQQQTRISASS) has biased composition (polar residues). The residue at position 244 (Ser-244) is a Phosphoserine; by CDK5. A phosphoserine mark is found at Ser-250, Ser-258, Ser-261, Ser-272, Ser-303, Ser-322, Ser-332, and Ser-340. The tract at residues 262-315 (ATRELDELMASLSDFKMQGLEQRVDGERPWAAGWPPSSRQSSPEGQDEGGFMAQ) is required for binding to PARVA and ILK. Residues 265-276 (ELDELMASLSDF) carry the LD motif 4 motif. The tract at residues 289–338 (RPWAAGWPPSSRQSSPEGQDEGGFMAQGKTGSSSPPGGLSKPGSQLDSML) is disordered. The segment covering 315-334 (QGKTGSSSPPGGLSKPGSQL) has biased composition (low complexity). The short motif at 333–345 (QLDSMLGSLQSDL) is the LD motif 5 element. 4 consecutive LIM zinc-binding domains span residues 356–415 (GVCG…LFSP), 416–473 (RCYY…DMFA), 474–533 (PKCG…RRGS), and 534–591 (LCSG…KLFC). Phosphoserine is present on Ser-533.

This sequence belongs to the paxillin family. As to quaternary structure, interacts in vitro with VCL/vinculin as well as to the SH3 domain of SRC and, when tyrosine phosphorylated, to the SH2 domain of CRK. Interacts with GIT1. Interacts with NUDT16L1/SDOS. Interacts with PTK2/FAK1. Interacts with PTK2B/PYK2. Interacts with ASAP2. Interacts with unphosphorylated ITGA4. Interacts with RNF5. Interacts with PDCD10. Interacts with NEK3, the interaction is prolactin-dependent. Interacts with PTK6. Interacts with TGFB1I1. Interacts with SORBS1. Interacts with PARVB. Interacts (via LD motif 4) with PARVA/PARVIN. Interacts (via LD motif 4) with ILK. Interacts (via cytoplasmic domain) with CEACAM1; the interaction is phosphotyrosyl-dependent. Interacts with LIMA1; this complex stabilizes actin dynamics. Interacts with CD36 (via C-terminus). Interacts with TRIM15. Interacts with PAK4; PAK4 acts as a scaffold to suppport PAXI phosphorylation at Ser-272. Phosphorylated by MAPK1/ERK2. Phosphorylated on tyrosine residues during integrin-mediated cell adhesion, embryonic development, fibroblast transformation and following stimulation of cells by mitogens. Phosphorylation at Ser-244 by CDK5 reduces its interaction with PTK2/FAK1 in matrix-cell focal adhesions (MCFA) during oligodendrocytes (OLs) differentiation. Phosphorylation at Tyr-31 and Tyr-118 by PTK6 promote the activation of RAC1 via CRK/CrKII, thereby promoting migration and invasion. Phosphorylation at Ser-250 by SLK is required for PXN redistribution and cell motility. Phosphorylation at Ser-272 promotes focal adhesion disassembly during cell migration.

It localises to the cytoplasm. Its subcellular location is the cytoskeleton. It is found in the cell junction. The protein localises to the focal adhesion. The protein resides in the cell cortex. In terms of biological role, cytoskeletal protein involved in actin-membrane attachment at sites of cell adhesion to the extracellular matrix (focal adhesion). Recruits other proteins such as TRIM15 to focal adhesion. This chain is Paxillin, found in Mus musculus (Mouse).